The chain runs to 1744 residues: Tanabin (1744 aa).

The tract at residues 1–12 (MEGYLASVSLGE) is head. The interval 8-48 (VSLGEESTQMWSLNKRLEAYLSRVKALEEENELLRKEIHSL) is coil 1A. In terms of domain architecture, IF rod spans 13–320 (ESTQMWSLNK…SLLEAESTRI (308 aa)). The tract at residues 49-60 (RSSKSERCWKKK) is linker 1. Positions 61–156 (HHEEMMKLRD…RDHEEEKALM (96 aa)) are coil 1B. The segment at 157 to 179 (EEEIASFSQRLENFRVAPVAFKP) is linker 12. The interval 180–193 (VEVDDYARKLSEIW) is coil 2A. The interval 194–199 (QGAVEE) is linker 2. The segment at 200 to 314 (YKSEVSVLEA…EVATYRSLLE (115 aa)) is coil 2B. The segment at 315–1744 (AESTRIYTDY…KKALRWKRMF (1430 aa)) is tail. 2 stretches are compositionally biased toward basic and acidic residues: residues 341-371 (RRRQSEDTRKTVSKDHRQSYSKKQIGDKNEL) and 785-815 (HSHHEETKTSESIAVEHNRMESEHAEVDKSS). Disordered stretches follow at residues 341-372 (RRRQSEDTRKTVSKDHRQSYSKKQIGDKNELQ), 785-816 (HSHHEETKTSESIAVEHNRMESEHAEVDKSSE), 976-996 (EENQLSENEGNQNFGGNDIEE), 1032-1093 (SMED…QQED), 1340-1470 (DSDL…FGDV), 1485-1506 (SGLAQEPSYLGDNEESEDSMEN), and 1560-1722 (AREK…LNGH). Polar residues predominate over residues 980 to 990 (LSENEGNQNFG). The span at 1034–1056 (EDEEEQNNPETEDNIGLEQESDQ) shows a compositional bias: acidic residues. Positions 1074 to 1086 (VVFKPEDMSDKSE) are enriched in basic and acidic residues. A compositionally biased stretch (acidic residues) spans 1340–1351 (DSDLESTEEQVQ). Positions 1352-1367 (ETERIPFKPEDSKMEN) are enriched in basic and acidic residues. Acidic residues predominate over residues 1368-1377 (ENSESEESVD). Positions 1386-1398 (HKSEEFEISKDYQ) are enriched in basic and acidic residues. Over residues 1412-1421 (LEDEFEDLTE) the composition is skewed to acidic residues. Positions 1423-1432 (PDVHEEHQNN) are enriched in basic and acidic residues. Residues 1433 to 1442 (DDSGASTFIT) show a composition bias toward polar residues. Positions 1445 to 1460 (DEDKEREVRESVSKDE) are enriched in basic and acidic residues. Residues 1496–1505 (DNEESEDSME) show a composition bias toward acidic residues. Composition is skewed to polar residues over residues 1576–1586 (EFTNENQSASP), 1597–1621 (EDSVISDNEGTTSSYEDLPNATSIS), and 1629–1639 (SNISTTEQSST). The segment covering 1680–1691 (RSEDEELDDEGS) has biased composition (acidic residues). The span at 1698 to 1709 (NDEKANGEHKDV) shows a compositional bias: basic and acidic residues.

It belongs to the intermediate filament family. Growth cones of embryonic vertebrate neurons.

The polypeptide is Tanabin (Xenopus laevis (African clawed frog)).